We begin with the raw amino-acid sequence, 224 residues long: 7-cyano-7-deazaguanine synthase (224 aa).

10-20 (LSGGLDSATVA) lines the ATP pocket. Zn(2+) contacts are provided by cysteine 189, cysteine 199, cysteine 202, and cysteine 205.

It belongs to the QueC family. Zn(2+) serves as cofactor.

The enzyme catalyses 7-carboxy-7-deazaguanine + NH4(+) + ATP = 7-cyano-7-deazaguanine + ADP + phosphate + H2O + H(+). Its pathway is purine metabolism; 7-cyano-7-deazaguanine biosynthesis. In terms of biological role, catalyzes the ATP-dependent conversion of 7-carboxy-7-deazaguanine (CDG) to 7-cyano-7-deazaguanine (preQ(0)). The protein is 7-cyano-7-deazaguanine synthase of Azotobacter vinelandii (strain DJ / ATCC BAA-1303).